Consider the following 226-residue polypeptide: ATP synthase F(0) complex subunit a (226 aa).

6 consecutive transmembrane segments (helical) span residues 6 to 26 (FASF…IIMF), 68 to 88 (WTLM…LGLL), 97 to 117 (QLSM…ITGF), 138 to 158 (IPML…ALAV), 164 to 184 (ITAG…LMNI), and 189 to 209 (ATIT…VALI).

It belongs to the ATPase A chain family. As to quaternary structure, component of the ATP synthase complex composed at least of ATP5F1A/subunit alpha, ATP5F1B/subunit beta, ATP5MC1/subunit c (homooctomer), MT-ATP6/subunit a, MT-ATP8/subunit 8, ATP5ME/subunit e, ATP5MF/subunit f, ATP5MG/subunit g, ATP5MK/subunit k, ATP5MJ/subunit j, ATP5F1C/subunit gamma, ATP5F1D/subunit delta, ATP5F1E/subunit epsilon, ATP5PF/subunit F6, ATP5PB/subunit b, ATP5PD/subunit d, ATP5PO/subunit OSCP. ATP synthase complex consists of a soluble F(1) head domain (subunits alpha(3) and beta(3)) - the catalytic core - and a membrane F(0) domain - the membrane proton channel (subunits c, a, 8, e, f, g, k and j). These two domains are linked by a central stalk (subunits gamma, delta, and epsilon) rotating inside the F1 region and a stationary peripheral stalk (subunits F6, b, d, and OSCP). Interacts with DNAJC30; interaction is direct.

It is found in the mitochondrion inner membrane. It catalyses the reaction H(+)(in) = H(+)(out). In terms of biological role, subunit a, of the mitochondrial membrane ATP synthase complex (F(1)F(0) ATP synthase or Complex V) that produces ATP from ADP in the presence of a proton gradient across the membrane which is generated by electron transport complexes of the respiratory chain. ATP synthase complex consist of a soluble F(1) head domain - the catalytic core - and a membrane F(1) domain - the membrane proton channel. These two domains are linked by a central stalk rotating inside the F(1) region and a stationary peripheral stalk. During catalysis, ATP synthesis in the catalytic domain of F(1) is coupled via a rotary mechanism of the central stalk subunits to proton translocation. With the subunit c (ATP5MC1), forms the proton-conducting channel in the F(0) domain, that contains two crucial half-channels (inlet and outlet) that facilitate proton movement from the mitochondrial intermembrane space (IMS) into the matrix. Protons are taken up via the inlet half-channel and released through the outlet half-channel, following a Grotthuss mechanism. The chain is ATP synthase F(0) complex subunit a from Mus musculus (Mouse).